Reading from the N-terminus, the 895-residue chain is Androgen receptor (895 aa).

Residues 1 to 533 (MEVQLGLGRV…PIDYYFPPQK (533 aa)) form a modulating region. An interaction with ZNF318 region spans residues 1-562 (MEVQLGLGRV…GSCKVFFKRA (562 aa)). Disordered stretches follow at residues 33–155 (VIQN…PTFP) and 175–211 (QLLQ…YLGG). 2 stretches are compositionally biased toward low complexity: residues 44 to 81 (AASA…GSPQ) and 175 to 200 (QLLQ…ASGA). At S66 the chain carries Phosphoserine; by CDK9. S79 is subject to Phosphoserine. A compositionally biased stretch (polar residues) spans 201–211 (PTSSKDNYLGG). At Y208 the chain carries Phosphotyrosine; by CSK. A Phosphoserine modification is found at S241. Y252 is subject to Phosphotyrosine; by CSK and TNK2. Phosphotyrosine; by CSK occurs at positions 292, 331, 342, and 347. The residue at position 348 (Y348) is a Phosphotyrosine; by CSK and TNK2. A Glycyl lysine isopeptide (Lys-Gly) (interchain with G-Cter in SUMO) cross-link involves residue K371. At Y378 the chain carries Phosphotyrosine; by CSK. K496 is covalently cross-linked (Glycyl lysine isopeptide (Lys-Gly) (interchain with G-Cter in SUMO)). Y510 and Y527 each carry phosphotyrosine; by CSK. An interaction with LPXN region spans residues 527–894 (YYFPPQKTCL…GKVKPIYFHT (368 aa)). Positions 534-607 (TCLICGDEAS…AGMTLGARKL (74 aa)) form a DNA-binding region, nuclear receptor. 2 NR C4-type zinc fingers span residues 535–555 (CLIC…CGSC) and 571–595 (CASR…LRKC). The tract at residues 547 to 637 (YGALTCGSCK…TEETAQKLTV (91 aa)) is interaction with HIPK3. Residues 567–894 (QKYLCASRND…GKVKPIYFHT (328 aa)) form an interaction with CCAR1 region. The interaction with KAT7 stretch occupies residues 600–894 (MTLGARKLKK…GKVKPIYFHT (295 aa)). A Phosphoserine; by STK4/MST1 modification is found at S626. Residues 644 to 875 (ECQPIFLNVL…DFPEMMAEII (232 aa)) form the NR LBD domain. 17beta-hydroxy-5alpha-androstan-3-one-binding residues include N681 and R728. Glycyl lysine isopeptide (Lys-Gly) (interchain with G-Cter in ubiquitin) cross-links involve residues K821 and K823. Residue T853 coordinates 17beta-hydroxy-5alpha-androstan-3-one. Y891 carries the phosphotyrosine; by CSK modification.

The protein belongs to the nuclear hormone receptor family. NR3 subfamily. As to quaternary structure, binds DNA as a homodimer. Part of a ternary complex containing AR, EFCAB6/DJBP and PARK7. Interacts with HIPK3 and NR0B2 in the presence of androgen. The ligand binding domain interacts with KAT7/HBO1 in the presence of dihydrotestosterone. Interacts with EFCAB6/DJBP, PQBP1, RANBP9, RBAK, SPDEF, SRA1, TGFB1I1 and RREB1. Interacts with ZMIZ1/ZIMP10 and ZMIZ2/ZMIP7 which both enhance its transactivation activity. Interacts with SLC30A9 and RAD54L2/ARIP4. Interacts with MACROD1 (via macro domain). Interacts via the ligand-binding domain with LXXLL and FXXLF motifs from NCOA1, NCOA2, NCOA3 and MAGEA11. Interacts (via nuclear receptor DNA binding domain and nuclear receptor ligand binding domain) with NCOA4. The AR N-terminal poly-Gln region binds Ran resulting in enhancement of AR-mediated transactivation. Ran-binding decreases as the poly-Gln length increases. Interacts with HIP1 (via coiled coil domain). Interacts (via ligand-binding domain) with TRIM68. Interacts with TNK2. Interacts with USP26. Interacts with RNF6. Interacts (regulated by RNF6 probably through polyubiquitination) with RNF14; regulates AR transcriptional activity. Interacts with PRMT2 and TRIM24. Interacts with RACK1. Interacts with RANBP10; this interaction enhances dihydrotestosterone-induced AR transcriptional activity. Interacts with PRPF6 in a hormone-independent way; this interaction enhances dihydrotestosterone-induced AR transcriptional activity. Interacts with STK4/MST1. Interacts with ZIPK/DAPK3. Interacts with LPXN. Interacts with MAK. Part of a complex containing AR, MAK and NCOA3. Interacts with CRY1. Interacts with CCAR1 and GATA2. Interacts with ZNF318. Interacts with BUD31. Interacts with ARID4A. Interacts with ARID4B. Interacts (via NR LBD domain) with ZBTB7A; the interaction is direct and androgen-dependent. Interacts with NCOR1. Interacts with NCOR2. Interacts with CRY2 in a ligand-dependent manner. In terms of processing, phosphorylated in prostate cancer cells in response to several growth factors including EGF. Phosphorylation is induced by c-Src kinase (CSK). Tyr-510 is one of the major phosphorylation sites and an increase in phosphorylation and Src kinase activity is associated with prostate cancer progression. Phosphorylation by TNK2 enhances the DNA-binding and transcriptional activity. Phosphorylation at Ser-66 by CDK9 regulates AR promoter selectivity and cell growth. Sumoylated on Lys-371 (major) and Lys-496. Ubiquitinated. Deubiquitinated by USP26. 'Lys-6' and 'Lys-27'-linked polyubiquitination by RNF6 modulates AR transcriptional activity and specificity. Post-translationally, palmitoylated by ZDHHC7 and ZDHHC21. Palmitoylation is required for plasma membrane targeting and for rapid intracellular signaling via ERK and AKT kinases and cAMP generation.

The protein localises to the nucleus. The protein resides in the cytoplasm. Steroid hormone receptors are ligand-activated transcription factors that regulate eukaryotic gene expression and affect cellular proliferation and differentiation in target tissues. Transcription factor activity is modulated by bound coactivator and corepressor proteins like ZBTB7A that recruits NCOR1 and NCOR2 to the androgen response elements/ARE on target genes, negatively regulating androgen receptor signaling and androgen-induced cell proliferation. Transcription activation is also down-regulated by NR0B2. Activated, but not phosphorylated, by HIPK3 and ZIPK/DAPK3. The protein is Androgen receptor (AR) of Papio hamadryas (Hamadryas baboon).